Consider the following 101-residue polypeptide: Ubiquitin-related modifier 1 homolog (101 aa).

Residue Gly101 is modified to 1-thioglycine. Gly101 is covalently cross-linked (Glycyl lysine isopeptide (Gly-Lys) (interchain with K-? in acceptor proteins)).

Belongs to the URM1 family. Interacts with cer. Post-translationally, C-terminal thiocarboxylation occurs in 2 steps, it is first acyl-adenylated (-COAMP) via the hesA/moeB/thiF part of the MOCS3 homolog, then thiocarboxylated (-COSH) via the rhodanese domain of the MOCS3 homolog.

Its subcellular location is the cytoplasm. Its pathway is tRNA modification; 5-methoxycarbonylmethyl-2-thiouridine-tRNA biosynthesis. Its function is as follows. Acts as a sulfur carrier required for 2-thiolation of mcm(5)S(2)U at tRNA wobble positions of cytosolic tRNA(Lys), tRNA(Glu) and tRNA(Gln). Serves as sulfur donor in tRNA 2-thiolation reaction by being thiocarboxylated (-COSH) at its C-terminus by MOCS3. The sulfur is then transferred to tRNA to form 2-thiolation of mcm(5)S(2)U. Also acts as a ubiquitin-like protein (UBL) that is covalently conjugated via an isopeptide bond to lysine residues of target proteins such as Prx2/Jafrac1, Ciao1, Eip71CD and GILT1. The thiocarboxylated form serves as substrate for conjugation and oxidative stress specifically induces the formation of UBL-protein conjugates. This chain is Ubiquitin-related modifier 1 homolog, found in Drosophila erecta (Fruit fly).